We begin with the raw amino-acid sequence, 264 residues long: Thymidylate synthase (264 aa).

Residue R21 coordinates dUMP. A (6R)-5,10-methylene-5,6,7,8-tetrahydrofolate-binding site is contributed by H51. 126–127 lines the dUMP pocket; sequence RR. C146 (nucleophile) is an active-site residue. DUMP-binding positions include 166 to 169, N177, and 207 to 209; these read RSAD and HIY. D169 serves as a coordination point for (6R)-5,10-methylene-5,6,7,8-tetrahydrofolate. Position 263 (A263) interacts with (6R)-5,10-methylene-5,6,7,8-tetrahydrofolate.

The protein belongs to the thymidylate synthase family. Bacterial-type ThyA subfamily. Homodimer.

It localises to the cytoplasm. The catalysed reaction is dUMP + (6R)-5,10-methylene-5,6,7,8-tetrahydrofolate = 7,8-dihydrofolate + dTMP. The protein operates within pyrimidine metabolism; dTTP biosynthesis. In terms of biological role, catalyzes the reductive methylation of 2'-deoxyuridine-5'-monophosphate (dUMP) to 2'-deoxythymidine-5'-monophosphate (dTMP) while utilizing 5,10-methylenetetrahydrofolate (mTHF) as the methyl donor and reductant in the reaction, yielding dihydrofolate (DHF) as a by-product. This enzymatic reaction provides an intracellular de novo source of dTMP, an essential precursor for DNA biosynthesis. This chain is Thymidylate synthase, found in Coxiella burnetii (strain Dugway 5J108-111).